The following is a 624-amino-acid chain: Chaperone protein HtpG (624 aa).

The segment at 1-336 (MKGQETRGFQ…SSDLPLNVSR (336 aa)) is a; substrate-binding. A b region spans residues 337–552 (EILQDSTVTR…ADEMSTQMAK (216 aa)). The interval 553 to 624 (LFAAAGQKVP…IRRMNQLLVS (72 aa)) is c.

This sequence belongs to the heat shock protein 90 family. As to quaternary structure, homodimer.

Its subcellular location is the cytoplasm. In terms of biological role, molecular chaperone. Has ATPase activity. This chain is Chaperone protein HtpG, found in Escherichia coli O139:H28 (strain E24377A / ETEC).